The primary structure comprises 341 residues: Ketol-acid reductoisomerase (NADP(+)) (341 aa).

The region spanning 2-181 (AKVYYNGDAN…GAARAGVLET (180 aa)) is the KARI N-terminal Rossmann domain. NADP(+)-binding positions include 25–28 (YGSQ), Arg-48, Ser-52, and 82–85 (DEKQ). Residue His-107 is part of the active site. Gly-133 contributes to the NADP(+) binding site. The 146-residue stretch at 182 to 327 (TFKEETETDL…RELRSMMPFV (146 aa)) folds into the KARI C-terminal knotted domain. 4 residues coordinate Mg(2+): Asp-190, Glu-194, Glu-226, and Glu-230. Ser-251 contacts substrate.

It belongs to the ketol-acid reductoisomerase family. It depends on Mg(2+) as a cofactor.

The enzyme catalyses (2R)-2,3-dihydroxy-3-methylbutanoate + NADP(+) = (2S)-2-acetolactate + NADPH + H(+). The catalysed reaction is (2R,3R)-2,3-dihydroxy-3-methylpentanoate + NADP(+) = (S)-2-ethyl-2-hydroxy-3-oxobutanoate + NADPH + H(+). It participates in amino-acid biosynthesis; L-isoleucine biosynthesis; L-isoleucine from 2-oxobutanoate: step 2/4. It functions in the pathway amino-acid biosynthesis; L-valine biosynthesis; L-valine from pyruvate: step 2/4. Functionally, involved in the biosynthesis of branched-chain amino acids (BCAA). Catalyzes an alkyl-migration followed by a ketol-acid reduction of (S)-2-acetolactate (S2AL) to yield (R)-2,3-dihydroxy-isovalerate. In the isomerase reaction, S2AL is rearranged via a Mg-dependent methyl migration to produce 3-hydroxy-3-methyl-2-ketobutyrate (HMKB). In the reductase reaction, this 2-ketoacid undergoes a metal-dependent reduction by NADPH to yield (R)-2,3-dihydroxy-isovalerate. The protein is Ketol-acid reductoisomerase (NADP(+)) of Geobacillus thermodenitrificans (strain NG80-2).